We begin with the raw amino-acid sequence, 360 residues long: Squamosa promoter-binding-like protein 7 (360 aa).

Gly residues predominate over residues 74–89 (AQGSGGGGGGGGGGSA). The tract at residues 74 to 98 (AQGSGGGGGGGGGGSADQGKRKEKA) is disordered. The segment at 105–182 (VPRCQVEGCD…AGHNERRRRS (78 aa)) adopts an SBP-type zinc-finger fold. Residues Cys-108, Cys-113, Cys-130, His-133, Cys-149, Cys-152, His-156, and Cys-168 each coordinate Zn(2+). The Bipartite nuclear localization signal motif lies at 165–181 (KKSCRRRLAGHNERRRR). The segment covering 172–182 (LAGHNERRRRS) has biased composition (basic residues). Disordered regions lie at residues 172–196 (LAGHNERRRRSNASEAMARGSAHPH), 261–306 (FFSD…HENQ), and 318–360 (TTAA…ARVV).

As to expression, expressed in young panicles.

It is found in the nucleus. In terms of biological role, trans-acting factor that binds specifically to the consensus nucleotide sequence 5'-TNCGTACAA-3'. May be involved in panicle development. The polypeptide is Squamosa promoter-binding-like protein 7 (SPL7) (Oryza sativa subsp. japonica (Rice)).